Consider the following 112-residue polypeptide: Large ribosomal subunit protein eL30y (112 aa).

Belongs to the eukaryotic ribosomal protein eL30 family.

This Arabidopsis thaliana (Mouse-ear cress) protein is Large ribosomal subunit protein eL30y (RPL30B).